We begin with the raw amino-acid sequence, 434 residues long: Probable exopolygalacturonase A (434 aa).

The signal sequence occupies residues 1–19 (MKLPILVTLFITLPALCVS). N-linked (GlcNAc...) asparagine glycosylation is found at Asn46, Asn57, Asn106, Asn199, and Asn207. The PbH1 1 repeat unit spans residues 232–253 (SSNIVIQDSRIVNTDDCVSFKP). Catalysis depends on Asp246, which acts as the Proton donor. Cys248 and Cys265 are oxidised to a cystine. The N-linked (GlcNAc...) asparagine glycan is linked to Asn254. Residues 255–275 (STQIVIQNLDCTGSHGISVGS) form a PbH1 2 repeat. His269 is a catalytic residue. N-linked (GlcNAc...) asparagine glycosylation is found at Asn293, Asn329, and Asn354. Cys392 and Cys398 are disulfide-bonded. Asn400 carries N-linked (GlcNAc...) asparagine glycosylation.

This sequence belongs to the glycosyl hydrolase 28 family.

The protein localises to the secreted. The enzyme catalyses [(1-&gt;4)-alpha-D-galacturonosyl](n) + H2O = alpha-D-galacturonate + [(1-&gt;4)-alpha-D-galacturonosyl](n-1). Functionally, specific in hydrolyzing the terminal glycosidic bond of polygalacturonic acid and oligogalacturonates. This is Probable exopolygalacturonase A (pgxA) from Aspergillus niger (strain ATCC MYA-4892 / CBS 513.88 / FGSC A1513).